The sequence spans 401 residues: Tyrosine--tRNA ligase (401 aa).

A 'HIGH' region motif is present at residues 43–52; it reads PTAPDLHLGH. Positions 227-231 match the 'KMSKS' region motif; that stretch reads KMSKS. ATP is bound at residue Lys230. Residues 338 to 399 enclose the S4 RNA-binding domain; it reads MAIGNVLKEA…GKRRFAKINL (62 aa).

Belongs to the class-I aminoacyl-tRNA synthetase family. TyrS type 2 subfamily. In terms of assembly, homodimer.

It localises to the cytoplasm. The enzyme catalyses tRNA(Tyr) + L-tyrosine + ATP = L-tyrosyl-tRNA(Tyr) + AMP + diphosphate + H(+). In terms of biological role, catalyzes the attachment of tyrosine to tRNA(Tyr) in a two-step reaction: tyrosine is first activated by ATP to form Tyr-AMP and then transferred to the acceptor end of tRNA(Tyr). This Idiomarina loihiensis (strain ATCC BAA-735 / DSM 15497 / L2-TR) protein is Tyrosine--tRNA ligase.